Consider the following 412-residue polypeptide: Heat stress transcription factor A-3 (412 aa).

A DNA-binding region spans residues 53 to 147 (IPPFLSKTFD…LLKNIHRRRS (95 aa)). Residues 144–170 (RRRSPQSNQTCCSSTSQSQGSPTEVGG) form a disordered region. Over residues 148 to 166 (PQSNQTCCSSTSQSQGSPT) the composition is skewed to low complexity. The segment at 159-225 (SQSQGSPTEV…QLLSFLAKLF (67 aa)) is hydrophobic repeat HR-A/B. Residues 166–224 (TEVGGEIEKLRKERRALMEEMVELQQQSRGTARHVDTVNQRLKAAEQRQKQLLSFLAKL) adopt a coiled-coil conformation. Positions 238–254 (KGKEKGGALGLEKARKK) match the Bipartite nuclear localization signal motif. The AHA1 motif lies at 277–286 (DDWERLLMYD). The AHA2 motif lies at 381 to 390 (DVCWEQFAAG).

This sequence belongs to the HSF family. Class A subfamily. As to quaternary structure, homotrimer. In terms of processing, exhibits temperature-dependent phosphorylation.

The protein localises to the nucleus. Functionally, transcriptional activator that specifically binds DNA sequence 5'-AGAAnnTTCT-3' known as heat shock promoter elements (HSE). Involved in heat stress response. Activated by DREB2A under heat stress. This Arabidopsis thaliana (Mouse-ear cress) protein is Heat stress transcription factor A-3 (HSFA3).